Consider the following 467-residue polypeptide: UDP-N-acetylmuramate--L-alanine ligase (467 aa).

Residue 114–120 (GTHGKTT) participates in ATP binding.

It belongs to the MurCDEF family.

It localises to the cytoplasm. The enzyme catalyses UDP-N-acetyl-alpha-D-muramate + L-alanine + ATP = UDP-N-acetyl-alpha-D-muramoyl-L-alanine + ADP + phosphate + H(+). Its pathway is cell wall biogenesis; peptidoglycan biosynthesis. Functionally, cell wall formation. The protein is UDP-N-acetylmuramate--L-alanine ligase of Bradyrhizobium sp. (strain ORS 278).